Consider the following 661-residue polypeptide: UvrABC system protein B (661 aa).

The Helicase ATP-binding domain maps to 23 to 180 (EGLQKGYRIQ…THLARIGYER (158 aa)). Residue 36–43 (GVTGSGKT) participates in ATP binding. Residues 89–112 (YYDYYQPEAYIPTRDLYIEKNADI) carry the Beta-hairpin motif. Positions 426 to 592 (QIDDLVNEIA…TIIKPLDEEI (167 aa)) constitute a Helicase C-terminal domain. The 36-residue stretch at 620–655 (EEYIALLEEEMYKAASELRYEDAARLRDELFNIREK) folds into the UVR domain.

This sequence belongs to the UvrB family. As to quaternary structure, forms a heterotetramer with UvrA during the search for lesions. Interacts with UvrC in an incision complex.

The protein localises to the cytoplasm. Functionally, the UvrABC repair system catalyzes the recognition and processing of DNA lesions. A damage recognition complex composed of 2 UvrA and 2 UvrB subunits scans DNA for abnormalities. Upon binding of the UvrA(2)B(2) complex to a putative damaged site, the DNA wraps around one UvrB monomer. DNA wrap is dependent on ATP binding by UvrB and probably causes local melting of the DNA helix, facilitating insertion of UvrB beta-hairpin between the DNA strands. Then UvrB probes one DNA strand for the presence of a lesion. If a lesion is found the UvrA subunits dissociate and the UvrB-DNA preincision complex is formed. This complex is subsequently bound by UvrC and the second UvrB is released. If no lesion is found, the DNA wraps around the other UvrB subunit that will check the other stand for damage. The polypeptide is UvrABC system protein B (Thermosipho africanus (strain TCF52B)).